Consider the following 368-residue polypeptide: Dihydroorotate dehydrogenase (quinone) (368 aa).

Residues 67 to 71 (AGFDK) and Thr91 contribute to the FMN site. Lys71 contacts substrate. Position 116–120 (116–120 (NRMGF)) interacts with substrate. The FMN site is built by Asn146 and Asn179. Asn179 lines the substrate pocket. The Nucleophile role is filled by Ser182. Asn184 is a binding site for substrate. The FMN site is built by Lys222 and Thr250. Residue 251–252 (NT) participates in substrate binding. FMN-binding positions include Gly276, Gly305, and 326-327 (YS).

This sequence belongs to the dihydroorotate dehydrogenase family. Type 2 subfamily. As to quaternary structure, monomer. Requires FMN as cofactor.

The protein resides in the cell membrane. It catalyses the reaction (S)-dihydroorotate + a quinone = orotate + a quinol. The protein operates within pyrimidine metabolism; UMP biosynthesis via de novo pathway; orotate from (S)-dihydroorotate (quinone route): step 1/1. Functionally, catalyzes the conversion of dihydroorotate to orotate with quinone as electron acceptor. This chain is Dihydroorotate dehydrogenase (quinone), found in Streptomyces coelicolor (strain ATCC BAA-471 / A3(2) / M145).